Here is a 503-residue protein sequence, read N- to C-terminus: Probable apyrase 4 (503 aa).

A compositionally biased stretch (low complexity) spans 1–14 (MQRSNARSRSNINS). The tract at residues 1 to 39 (MQRSNARSRSNINSDMVDPPEVQTSPGNHRSSPSTAAKP) is disordered. Topologically, residues 1–45 (MQRSNARSRSNINSDMVDPPEVQTSPGNHRSSPSTAAKPKSKRTK) are cytoplasmic. A helical; Signal-anchor for type II membrane protein transmembrane segment spans residues 46–66 (SIIFVIVACVTIALGLLFIGY). Residues 67-503 (SILRSGRNRR…DLSNVAKYKI (437 aa)) lie on the Extracellular side of the membrane. 83–93 (VIIDGGSSGTR) provides a ligand contact to ATP. The Proton acceptor role is filled by Glu-206. 230–240 (GIVELGGASAQ) is a binding site for ATP. N-linked (GlcNAc...) asparagine glycosylation is found at Asn-261, Asn-293, and Asn-338.

The protein belongs to the GDA1/CD39 NTPase family. Ca(2+) is required as a cofactor. In terms of tissue distribution, expressed both in the primary root and lateral root but not in the rosette leaves.

The protein localises to the membrane. It carries out the reaction a ribonucleoside 5'-triphosphate + 2 H2O = a ribonucleoside 5'-phosphate + 2 phosphate + 2 H(+). Functionally, catalyzes the hydrolysis of phosphoanhydride bonds of nucleoside tri- and di-phosphates. This is Probable apyrase 4 (APY4) from Arabidopsis thaliana (Mouse-ear cress).